The sequence spans 155 residues: Peptidyl-prolyl cis-trans isomerase ppi1 (155 aa).

The region spanning 1–154 is the PPIase cyclophilin-type domain; that stretch reads MANVELQTSL…EPLKIIKAVA (154 aa).

It belongs to the cyclophilin-type PPIase family. PPIL1 subfamily. In terms of assembly, interacts with cwf13/snw1.

It catalyses the reaction [protein]-peptidylproline (omega=180) = [protein]-peptidylproline (omega=0). In terms of biological role, PPIases accelerate the folding of proteins. It catalyzes the cis-trans isomerization of proline imidic peptide bonds in oligopeptides. The protein is Peptidyl-prolyl cis-trans isomerase ppi1 (ppi1) of Schizosaccharomyces pombe (strain 972 / ATCC 24843) (Fission yeast).